Consider the following 674-residue polypeptide: Primary amine oxidase (674 aa).

The first 25 residues, 1 to 25, serve as a signal peptide directing secretion; sequence MASTTTMRLALFSVLTLLSFHAVVS. Residue Asn156 is glycosylated (N-linked (GlcNAc...) asparagine). Cys162 and Cys183 are oxidised to a cystine. Positions 226-236 are enriched in polar residues; the sequence is ENTEYQVSKQS. Residues 226–251 form a disordered region; sequence ENTEYQVSKQSPPFGPKQHSLTSHQP. 323–334 contacts substrate; that stretch reads FFDSGEFGFGLS. Asp325 (proton acceptor) is an active-site residue. A disulfide bond links Cys344 and Cys370. N-linked (GlcNAc...) asparagine glycosylation is present at Asn389. 409 to 414 contacts substrate; sequence VGNYDN. Tyr412 functions as the Schiff-base intermediate with substrate; via topaquinone in the catalytic mechanism. Tyr412 is modified (2',4',5'-topaquinone). 2 residues coordinate Cu cation: His467 and His469. Mn(2+)-binding residues include Asp476, Phe477, Asp478, Asp617, and Ile618. His628 is a Cu cation binding site.

This sequence belongs to the copper/topaquinone oxidase family. As to quaternary structure, homodimer. Cu cation serves as cofactor. Mn(2+) is required as a cofactor. Requires L-topaquinone as cofactor. Post-translationally, topaquinone (TPQ) is generated by copper-dependent autoxidation of a specific tyrosyl residue.

The catalysed reaction is a primary methyl amine + O2 + H2O = an aldehyde + H2O2 + NH4(+). The protein is Primary amine oxidase of Pisum sativum (Garden pea).